The sequence spans 121 residues: Small ribosomal subunit protein uS13 (121 aa).

A disordered region spans residues Pro-96–Lys-121. Over residues Ala-106–Lys-121 the composition is skewed to basic residues.

It belongs to the universal ribosomal protein uS13 family. Part of the 30S ribosomal subunit. Forms a loose heterodimer with protein S19. Forms two bridges to the 50S subunit in the 70S ribosome.

Its function is as follows. Located at the top of the head of the 30S subunit, it contacts several helices of the 16S rRNA. In the 70S ribosome it contacts the 23S rRNA (bridge B1a) and protein L5 of the 50S subunit (bridge B1b), connecting the 2 subunits; these bridges are implicated in subunit movement. Contacts the tRNAs in the A and P-sites. The protein is Small ribosomal subunit protein uS13 of Streptococcus pyogenes serotype M3 (strain SSI-1).